Here is an 89-residue protein sequence, read N- to C-terminus: MVMTAEDKAQVIGEHKKHDGDTGSPEVQVALLTSRIVYLTGHFKSHPKDFHSRTGLLKLVGQRRKLLNYLKKTDVQRYRDLIAKLGLRK.

Over residues 1–21 (MVMTAEDKAQVIGEHKKHDGD) the composition is skewed to basic and acidic residues. The interval 1 to 24 (MVMTAEDKAQVIGEHKKHDGDTGS) is disordered.

It belongs to the universal ribosomal protein uS15 family. As to quaternary structure, part of the 30S ribosomal subunit. Forms a bridge to the 50S subunit in the 70S ribosome, contacting the 23S rRNA.

Functionally, one of the primary rRNA binding proteins, it binds directly to 16S rRNA where it helps nucleate assembly of the platform of the 30S subunit by binding and bridging several RNA helices of the 16S rRNA. Its function is as follows. Forms an intersubunit bridge (bridge B4) with the 23S rRNA of the 50S subunit in the ribosome. The polypeptide is Small ribosomal subunit protein uS15 (Solidesulfovibrio magneticus (strain ATCC 700980 / DSM 13731 / RS-1) (Desulfovibrio magneticus)).